Consider the following 489-residue polypeptide: UDP-N-acetylmuramoylalanine--D-glutamate ligase (489 aa).

126-132 is a binding site for ATP; sequence GTNGKTT.

It belongs to the MurCDEF family.

The protein localises to the cytoplasm. It catalyses the reaction UDP-N-acetyl-alpha-D-muramoyl-L-alanine + D-glutamate + ATP = UDP-N-acetyl-alpha-D-muramoyl-L-alanyl-D-glutamate + ADP + phosphate + H(+). It functions in the pathway cell wall biogenesis; peptidoglycan biosynthesis. In terms of biological role, cell wall formation. Catalyzes the addition of glutamate to the nucleotide precursor UDP-N-acetylmuramoyl-L-alanine (UMA). The sequence is that of UDP-N-acetylmuramoylalanine--D-glutamate ligase from Mycobacterium avium (strain 104).